Here is a 354-residue protein sequence, read N- to C-terminus: MSDSIIELKNISVHFQNGSESIDAVKNINLAIEKGEIFGIVGYSGAGKSSLVRLINLLHHPSSGDMMIGQTKTVKNGNVLIKGKELRNLRQKIGMIFQHFNLLDQSTVLGNVLFALKHSKMSKEKRLEKAKKLVEEVGLFDRIDNHPSQLSGGQKQRVAIARALANDPEILISDEATSALDPKTTKQILELLADLNKRTGLTIVLITHEMQVVKNIANRVAVMRDGEIIEKNSTYSIFADPQKPLTKEFIESASGNQEALEKILRQPEIARLQKNEFLIQLGFSGSSTDEPLISSLAKNYGVSANILYGNVETIENIPIGTLIVVLSGTATKLKQALDEIKKQNVKLEIIKEGK.

Positions 6 to 250 (IELKNISVHF…PQKPLTKEFI (245 aa)) constitute an ABC transporter domain. An ATP-binding site is contributed by 42–49 (GYSGAGKS).

The protein belongs to the ABC transporter superfamily. Methionine importer (TC 3.A.1.24) family. As to quaternary structure, the complex is composed of two ATP-binding proteins (MetN), two transmembrane proteins (MetI) and a solute-binding protein (MetQ).

It localises to the cell membrane. It carries out the reaction L-methionine(out) + ATP + H2O = L-methionine(in) + ADP + phosphate + H(+). The catalysed reaction is D-methionine(out) + ATP + H2O = D-methionine(in) + ADP + phosphate + H(+). In terms of biological role, part of the ABC transporter complex MetNIQ involved in methionine import. Responsible for energy coupling to the transport system. The polypeptide is Methionine import ATP-binding protein MetN 2 (Oenococcus oeni (strain ATCC BAA-331 / PSU-1)).